Consider the following 83-residue polypeptide: Snake venom metalloproteinase BnP1 (83 aa).

The Peptidase M12B domain maps to 8–83 (SYIELAVVAD…NPQCIINQPI (76 aa)). E11, C77, and N80 together coordinate Ca(2+).

The protein belongs to the venom metalloproteinase (M12B) family. P-I subfamily. Monomer. Zn(2+) is required as a cofactor. In terms of tissue distribution, expressed by the venom gland.

The protein resides in the secreted. Inhibited by EDTA. This protein is a zinc protease from snake venom that is devoid of significant myotoxic and hemorrhagic activities. It hydrolyzes the Aalpha-chain and more slowly the Bbeta-chain of fibrin and fibrinogen, without affecting the gamma-chains. It induces cell detachment and a apoptosis (anoikis) in endothelial cells. The polypeptide is Snake venom metalloproteinase BnP1 (Bothrops pauloensis (Neuwied's lancehead)).